We begin with the raw amino-acid sequence, 172 residues long: MAGIGRKIASYVGIVDDRRYDEEDLPDEELTTEVYSDDGYEPSSEVTQLHHHDSNEQHARGHKAVQHRRRSELEEPSIADINRILTVHPRNYNEARTIGEQFREGIPVIMNLTEMDDADAKRLVDFAAGLIFGLRGTIERVTSKVFLLCPRNVNVTPEDKARIASGGFFNQS.

The disordered stretch occupies residues 18 to 73 (RRYDEEDLPDEELTTEVYSDDGYEPSSEVTQLHHHDSNEQHARGHKAVQHRRRSEL). The segment covering 22 to 40 (EEDLPDEELTTEVYSDDGY) has biased composition (acidic residues). The segment covering 48 to 59 (QLHHHDSNEQHA) has biased composition (basic and acidic residues). The span at 60–70 (RGHKAVQHRRR) shows a compositional bias: basic residues.

This sequence belongs to the SepF family. Homodimer. Interacts with FtsZ.

It is found in the cytoplasm. Functionally, cell division protein that is part of the divisome complex and is recruited early to the Z-ring. Probably stimulates Z-ring formation, perhaps through the cross-linking of FtsZ protofilaments. Its function overlaps with FtsA. The polypeptide is Cell division protein SepF (Cutibacterium acnes (strain DSM 16379 / KPA171202) (Propionibacterium acnes)).